The sequence spans 219 residues: dTTP/UTP pyrophosphatase (219 aa).

Catalysis depends on D79, which acts as the Proton acceptor.

It belongs to the Maf family. YhdE subfamily. Requires a divalent metal cation as cofactor.

The protein resides in the cytoplasm. It carries out the reaction dTTP + H2O = dTMP + diphosphate + H(+). It catalyses the reaction UTP + H2O = UMP + diphosphate + H(+). Its function is as follows. Nucleoside triphosphate pyrophosphatase that hydrolyzes dTTP and UTP. May have a dual role in cell division arrest and in preventing the incorporation of modified nucleotides into cellular nucleic acids. The polypeptide is dTTP/UTP pyrophosphatase (Oleidesulfovibrio alaskensis (strain ATCC BAA-1058 / DSM 17464 / G20) (Desulfovibrio alaskensis)).